We begin with the raw amino-acid sequence, 231 residues long: Large ribosomal subunit protein uL1 (231 aa).

The protein belongs to the universal ribosomal protein uL1 family. As to quaternary structure, part of the 50S ribosomal subunit.

Its function is as follows. Binds directly to 23S rRNA. The L1 stalk is quite mobile in the ribosome, and is involved in E site tRNA release. Functionally, protein L1 is also a translational repressor protein, it controls the translation of the L11 operon by binding to its mRNA. In Dechloromonas aromatica (strain RCB), this protein is Large ribosomal subunit protein uL1.